The following is a 128-amino-acid chain: NADPH-dependent 7-cyano-7-deazaguanine reductase (128 aa).

Catalysis depends on Cys39, which acts as the Thioimide intermediate. Asp46 acts as the Proton donor in catalysis. Residues Ile61–Leu63 and His80–Glu81 each bind substrate.

The protein belongs to the GTP cyclohydrolase I family. QueF type 1 subfamily.

The protein localises to the cytoplasm. It carries out the reaction 7-aminomethyl-7-carbaguanine + 2 NADP(+) = 7-cyano-7-deazaguanine + 2 NADPH + 3 H(+). The protein operates within tRNA modification; tRNA-queuosine biosynthesis. Its function is as follows. Catalyzes the NADPH-dependent reduction of 7-cyano-7-deazaguanine (preQ0) to 7-aminomethyl-7-deazaguanine (preQ1). This is NADPH-dependent 7-cyano-7-deazaguanine reductase from Magnetococcus marinus (strain ATCC BAA-1437 / JCM 17883 / MC-1).